Reading from the N-terminus, the 568-residue chain is Sulfate adenylyltransferase (568 aa).

The segment at 1–162 is N-terminal; that stretch reads MANSPHGGVL…IEAVNKLNHY (162 aa). Residues 163–388 form a catalytic region; the sequence is DYVALRYSPA…LRESSPPRAT (226 aa). Residue Q190 participates in sulfate binding. ATP-binding positions include 190–193 and 284–287; these read QTRN and GRDH. Active-site residues include T191, R192, and N193. Residue R192 participates in sulfate binding. A288 is a sulfate binding site. Residue V326 participates in ATP binding. The segment at 389 to 568 is allosteric regulation domain; adenylyl-sulfate kinase-like; it reads QGFTIFLTGY…LESEGYFDRL (180 aa). 3'-phosphoadenylyl sulfate is bound by residues 428 to 431, R445, 471 to 472, and R510; these read DTVR and IA.

It in the N-terminal section; belongs to the sulfate adenylyltransferase family. This sequence in the C-terminal section; belongs to the APS kinase family. Homohexamer. Dimer of trimers.

It is found in the cytoplasm. It catalyses the reaction sulfate + ATP + H(+) = adenosine 5'-phosphosulfate + diphosphate. The protein operates within sulfur metabolism; hydrogen sulfide biosynthesis; sulfite from sulfate: step 1/3. Its activity is regulated as follows. Allosterically inhibited by 3'-phosphoadenosine 5'-phosphosulfate (PAPS). Its function is as follows. Catalyzes the first intracellular reaction of sulfate assimilation, forming adenosine-5'-phosphosulfate (APS) from inorganic sulfate and ATP. Plays an important role in sulfate activation as a component of the biosynthesis pathway of sulfur-containing amino acids. This Aspergillus terreus protein is Sulfate adenylyltransferase.